The chain runs to 877 residues: Alanine--tRNA ligase (877 aa).

Zn(2+)-binding residues include His556, His560, Cys657, and His661.

The protein belongs to the class-II aminoacyl-tRNA synthetase family. Zn(2+) is required as a cofactor.

It localises to the cytoplasm. It carries out the reaction tRNA(Ala) + L-alanine + ATP = L-alanyl-tRNA(Ala) + AMP + diphosphate. In terms of biological role, catalyzes the attachment of alanine to tRNA(Ala) in a two-step reaction: alanine is first activated by ATP to form Ala-AMP and then transferred to the acceptor end of tRNA(Ala). Also edits incorrectly charged Ser-tRNA(Ala) and Gly-tRNA(Ala) via its editing domain. The protein is Alanine--tRNA ligase of Wolbachia pipientis wMel.